The sequence spans 97 residues: Class II hydrophobin 1 (97 aa).

Residues 1–16 (MKFFAIAALFAAAAVA) form the signal peptide. Residues 17 to 22 (QPLEDR) constitute a propeptide that is removed on maturation. 4 disulfides stabilise this stretch: Cys-30–Cys-79, Cys-40–Cys-70, Cys-41–Cys-53, and Cys-80–Cys-91.

It belongs to the cerato-ulmin hydrophobin family. Homotetramer. Further self-assembles to form highly ordered films at water-air interfaces through intermolecular interactions.

The protein resides in the secreted. The protein localises to the cell wall. Its function is as follows. Aerial growth, conidiation, and dispersal of filamentous fungi in the environment rely upon a capability of their secreting small amphipathic proteins called hydrophobins (HPBs) with low sequence identity. Class I can self-assemble into an outermost layer of rodlet bundles on aerial cell surfaces, conferring cellular hydrophobicity that supports fungal growth, development and dispersal; whereas Class II form highly ordered films at water-air interfaces through intermolecular interactions but contribute nothing to the rodlet structure. Hbf1 is a class II hydrophobin that has a role in hyphal development and is in particular required for the formation of aerial hyphae. The chain is Class II hydrophobin 1 from Hypocrea jecorina (Trichoderma reesei).